We begin with the raw amino-acid sequence, 435 residues long: Trigger factor (435 aa).

Residues 163 to 248 (GDTVTIDFDG…IHEIKTKELP (86 aa)) form the PPIase FKBP-type domain.

It belongs to the FKBP-type PPIase family. Tig subfamily.

It is found in the cytoplasm. The enzyme catalyses [protein]-peptidylproline (omega=180) = [protein]-peptidylproline (omega=0). Functionally, involved in protein export. Acts as a chaperone by maintaining the newly synthesized protein in an open conformation. Functions as a peptidyl-prolyl cis-trans isomerase. The sequence is that of Trigger factor from Pediococcus pentosaceus (strain ATCC 25745 / CCUG 21536 / LMG 10740 / 183-1w).